Consider the following 750-residue polypeptide: Photosystem I P700 chlorophyll a apoprotein A1 (750 aa).

8 helical membrane passes run 70-93 (VFSA…FHGA), 156-179 (LYCT…FHYH), 195-219 (LNHH…HVSL), 291-309 (IAHH…GHMY), 346-369 (WHAQ…HHMY), 385-411 (LSLF…IFMV), 433-455 (AIIS…LYIH), and 531-549 (FLVH…LILL). The [4Fe-4S] cluster site is built by Cys-573 and Cys-582. 2 consecutive transmembrane segments (helical) span residues 589–610 (HVFL…HFSW) and 664–686 (LSAY…MFLF). Residue His-675 participates in chlorophyll a' binding. 2 residues coordinate chlorophyll a: Met-683 and Tyr-691. Trp-692 is a binding site for phylloquinone. The chain crosses the membrane as a helical span at residues 724–744 (AVGVTHYLLGGIATTWAFFLA).

This sequence belongs to the PsaA/PsaB family. The PsaA/B heterodimer binds the P700 chlorophyll special pair and subsequent electron acceptors. PSI consists of a core antenna complex that captures photons, and an electron transfer chain that converts photonic excitation into a charge separation. The eukaryotic PSI reaction center is composed of at least 11 subunits. It depends on P700 is a chlorophyll a/chlorophyll a' dimer, A0 is one or more chlorophyll a, A1 is one or both phylloquinones and FX is a shared 4Fe-4S iron-sulfur center. as a cofactor.

The protein resides in the plastid. Its subcellular location is the chloroplast thylakoid membrane. The catalysed reaction is reduced [plastocyanin] + hnu + oxidized [2Fe-2S]-[ferredoxin] = oxidized [plastocyanin] + reduced [2Fe-2S]-[ferredoxin]. PsaA and PsaB bind P700, the primary electron donor of photosystem I (PSI), as well as the electron acceptors A0, A1 and FX. PSI is a plastocyanin-ferredoxin oxidoreductase, converting photonic excitation into a charge separation, which transfers an electron from the donor P700 chlorophyll pair to the spectroscopically characterized acceptors A0, A1, FX, FA and FB in turn. Oxidized P700 is reduced on the lumenal side of the thylakoid membrane by plastocyanin. This Solanum bulbocastanum (Wild potato) protein is Photosystem I P700 chlorophyll a apoprotein A1.